The sequence spans 74 residues: Omwaprin-b (74 aa).

A signal peptide spans 1-24; the sequence is MSSGGLLLLLGLLTLWEVLTPVSS. A WAP domain is found at 27–71; that stretch reads RPKKPGLCPPRPQKPCVKECKNDWSCPGQQKCCNYGCIDECRDPI. Cystine bridges form between Cys-34–Cys-59, Cys-42–Cys-63, Cys-46–Cys-58, and Cys-52–Cys-67.

It belongs to the venom waprin family. In terms of tissue distribution, expressed by the venom gland.

It is found in the secreted. Functionally, damages membranes of susceptible bacteria. Has antibacterial activity against the Gram-positive bacteria B.megaterium and S.warneri. After 45 minutes of treatment with this protein, B.megaterium have no visible pili and are smooth. Has no antibacterial activity against the Gram-positive bacteria B.thuringiensis, S.aureus, S.clavuligerus and B. anthracis, or the Gram-negative bacteria E.coli and A.tumefaciens. Has no hemolytic activity. Does not inhibit the proteinases elastase and cathepsin G. Is not toxic to mice. The protein is Omwaprin-b of Oxyuranus microlepidotus (Inland taipan).